The sequence spans 337 residues: Peroxidase 14 (337 aa).

A signal peptide spans 1 to 22 (MARIGSFLILLSLTYALTLCIC). N-linked (GlcNAc...) asparagine glycosylation is present at asparagine 24. Disulfide bonds link cysteine 44/cysteine 124, cysteine 77/cysteine 82, cysteine 130/cysteine 331, and cysteine 209/cysteine 241. The Proton acceptor role is filled by histidine 75. Ca(2+) contacts are provided by aspartate 76, valine 79, glycine 81, aspartate 83, and serine 85. Proline 172 lines the substrate pocket. Asparagine 191 carries N-linked (GlcNAc...) asparagine glycosylation. Histidine 202 is a binding site for heme b. Threonine 203 contributes to the Ca(2+) binding site. N-linked (GlcNAc...) asparagine glycans are attached at residues asparagine 218 and asparagine 249. 3 residues coordinate Ca(2+): aspartate 254, serine 257, and aspartate 262.

Belongs to the peroxidase family. Classical plant (class III) peroxidase subfamily. Requires heme b as cofactor. It depends on Ca(2+) as a cofactor.

The protein localises to the secreted. It catalyses the reaction 2 a phenolic donor + H2O2 = 2 a phenolic radical donor + 2 H2O. In terms of biological role, removal of H(2)O(2), oxidation of toxic reductants, biosynthesis and degradation of lignin, suberization, auxin catabolism, response to environmental stresses such as wounding, pathogen attack and oxidative stress. These functions might be dependent on each isozyme/isoform in each plant tissue. This Arabidopsis thaliana (Mouse-ear cress) protein is Peroxidase 14 (PER14).